The sequence spans 309 residues: Ornithine carbamoyltransferase (309 aa).

Residues 56-59 (STRT), Gln83, Arg107, and 134-137 (HPCQ) contribute to the carbamoyl phosphate site. Residues Asn165, Asp223, and 227–228 (SM) contribute to the L-ornithine site. Carbamoyl phosphate contacts are provided by residues 263–264 (CL) and Arg291.

Belongs to the aspartate/ornithine carbamoyltransferase superfamily. OTCase family.

It localises to the cytoplasm. The enzyme catalyses carbamoyl phosphate + L-ornithine = L-citrulline + phosphate + H(+). It functions in the pathway amino-acid biosynthesis; L-arginine biosynthesis; L-arginine from L-ornithine and carbamoyl phosphate: step 1/3. Functionally, reversibly catalyzes the transfer of the carbamoyl group from carbamoyl phosphate (CP) to the N(epsilon) atom of ornithine (ORN) to produce L-citrulline. The polypeptide is Ornithine carbamoyltransferase (Burkholderia cenocepacia (strain HI2424)).